Here is a 1297-residue protein sequence, read N- to C-terminus: Phosphoribosylformylglycinamidine synthase (1297 aa).

Residues 307-318 and Ala678 each bind ATP; that span reads GASTGSGGEIRD. Residues Glu718, Asn722, and Asp886 each contribute to the Mg(2+) site. The region spanning 1044–1297 is the Glutamine amidotransferase type-1 domain; it reads MAILREQGVN…MFQNARKNLG (254 aa). The active-site Nucleophile is Cys1137. Active-site residues include His1262 and Glu1264.

It in the N-terminal section; belongs to the FGAMS family. As to quaternary structure, monomer.

Its subcellular location is the cytoplasm. The catalysed reaction is N(2)-formyl-N(1)-(5-phospho-beta-D-ribosyl)glycinamide + L-glutamine + ATP + H2O = 2-formamido-N(1)-(5-O-phospho-beta-D-ribosyl)acetamidine + L-glutamate + ADP + phosphate + H(+). It functions in the pathway purine metabolism; IMP biosynthesis via de novo pathway; 5-amino-1-(5-phospho-D-ribosyl)imidazole from N(2)-formyl-N(1)-(5-phospho-D-ribosyl)glycinamide: step 1/2. Its function is as follows. Phosphoribosylformylglycinamidine synthase involved in the purines biosynthetic pathway. Catalyzes the ATP-dependent conversion of formylglycinamide ribonucleotide (FGAR) and glutamine to yield formylglycinamidine ribonucleotide (FGAM) and glutamate. The chain is Phosphoribosylformylglycinamidine synthase from Vibrio vulnificus (strain CMCP6).